The following is an 870-amino-acid chain: MSTRYNARAAEPKWQKIWEERGDFLMRDDADGKPKYYVLEMFPYPSGRIHMGHVRNYTMGDVIARYKKARGFNVLHPMGWDAFGMPAENAAMEKNVHPKGWTYDNIAAMREQLKAIGLAIDWSREFATCDPEYYGHEQALFLDMLEAGLVSRKKSMVNWDPVDNTVLANEQVIDGRGWRSGALVERRELTQWFLKISDFADELLEGLDTLDRWPEKVRLMQKNWIGRSEGARVFFELENAPDGNTKLEIFTTRPDTLYGASFCALSPHHPLTQSLAKDNPALTDFIRECDRIGTSEEAIETADKMGFDTGLKARHPFIEGKTLPVYVANFVLMDYGTGAIFACPAHDQRDLDFARKYNLPVIPVVAPKDKQGAELDAFASGLAETGTDAYTGDGVAINSDFLNGLDVQSAKRAAIDRLEAKGIGEGTVNYRLRDWGISRQRYWGCPIPVIHCASCGTLPVPRDQLPVVLPDDVNFSEPGNPLDRHPSWKHVDCPKCGKPASRETDTFDTFVDSSWYFVRFTAPDAPTPTDKALADHWLPVDQYIGGIEHAILHLLYSRFFTRAMKATGHVSLDEPFAGLFTQGMVNHETYRDAEGRWVPPAEVDIETVSGKRVAKRIADGEPVIIGSVEKMSKSKKNTVDPEDIIAKYGADTARWFMLSDSPPERDVQWTDQGAEGAWRFTQRLWRMVTERQEDLAPTGTPMPTAFSEDELTLRRAAHQALAAATEDFENLRFNRAVARVYELANAVSGFTPGTPEGAFAKREALEILVQIVGPMMPHIAEECWEALGHGEPLTAAEWPVADKALLVEDSVTIAVQVNGKRRDELTIARDADRETVERAALALEKVGKAIDGKPVRKVIVVPGKIVNIVV.

The 'HIGH' region motif lies at 43 to 53 (PYPSGRIHMGH). Residues 630–634 (KMSKS) carry the 'KMSKS' region motif. Lys-633 provides a ligand contact to ATP.

It belongs to the class-I aminoacyl-tRNA synthetase family.

It is found in the cytoplasm. It carries out the reaction tRNA(Leu) + L-leucine + ATP = L-leucyl-tRNA(Leu) + AMP + diphosphate. The sequence is that of Leucine--tRNA ligase from Parvibaculum lavamentivorans (strain DS-1 / DSM 13023 / NCIMB 13966).